Consider the following 561-residue polypeptide: Ankyrin repeat protein OPG189 (561 aa).

7 ANK repeats span residues 68-98 (YGEN…NINK), 172-208 (YGCT…DVDK), 212-242 (YGNT…NIDS), 246-275 (NGYT…NVNA), 279-307 (FGTT…ELEI), 342-371 (YNET…DFET), and 375-404 (SGCT…SLKI).

Belongs to the orthopoxvirus OPG189 protein family.

In terms of biological role, contributes to viral release without involving rearrangement of host actin. The protein is Ankyrin repeat protein OPG189 (OPG189) of Cynomys gunnisoni (Gunnison's prairie dog).